Consider the following 430-residue polypeptide: Adenylosuccinate synthetase (430 aa).

GTP is bound by residues 12–18 (GDEGKGK) and 40–42 (GHT). D13 serves as the catalytic Proton acceptor. The Mg(2+) site is built by D13 and G40. IMP is bound by residues 13-16 (DEGK), 38-41 (NAGH), T128, R142, Q223, T238, and R302. Catalysis depends on H41, which acts as the Proton donor. 298 to 304 (TTTGRPR) is a substrate binding site. Residues R304, 330–332 (LLD), and 412–414 (SVG) each bind GTP.

The protein belongs to the adenylosuccinate synthetase family. As to quaternary structure, homodimer. Mg(2+) is required as a cofactor.

It is found in the cytoplasm. The catalysed reaction is IMP + L-aspartate + GTP = N(6)-(1,2-dicarboxyethyl)-AMP + GDP + phosphate + 2 H(+). It participates in purine metabolism; AMP biosynthesis via de novo pathway; AMP from IMP: step 1/2. Its function is as follows. Plays an important role in the de novo pathway of purine nucleotide biosynthesis. Catalyzes the first committed step in the biosynthesis of AMP from IMP. This Listeria monocytogenes serotype 4b (strain CLIP80459) protein is Adenylosuccinate synthetase.